The sequence spans 304 residues: Quinolinate synthase (304 aa).

His24 and Ser41 together coordinate iminosuccinate. Cys86 contacts [4Fe-4S] cluster. Iminosuccinate is bound by residues 112–114 and Ser129; that span reads YVN. Residue Cys171 coordinates [4Fe-4S] cluster. Iminosuccinate is bound by residues 197–199 and Thr214; that span reads HPE. Position 259 (Cys259) interacts with [4Fe-4S] cluster.

Belongs to the quinolinate synthase family. Type 2 subfamily. [4Fe-4S] cluster is required as a cofactor.

Its subcellular location is the cytoplasm. The catalysed reaction is iminosuccinate + dihydroxyacetone phosphate = quinolinate + phosphate + 2 H2O + H(+). It participates in cofactor biosynthesis; NAD(+) biosynthesis; quinolinate from iminoaspartate: step 1/1. In terms of biological role, catalyzes the condensation of iminoaspartate with dihydroxyacetone phosphate to form quinolinate. The chain is Quinolinate synthase from Geobacter metallireducens (strain ATCC 53774 / DSM 7210 / GS-15).